Here is a 332-residue protein sequence, read N- to C-terminus: L-lactate dehydrogenase A chain (332 aa).

Ala-2 is modified (N-acetylalanine). Residue Lys-5 is modified to N6-acetyllysine; alternate. Residue Lys-5 is modified to N6-succinyllysine; alternate. N6-acetyllysine is present on Lys-14. 29 to 57 serves as a coordination point for NAD(+); that stretch reads GAVGMACAISILMKDLADEVALVDVMEDK. Position 57 is an N6-acetyllysine; alternate (Lys-57). Lys-57 is covalently cross-linked (Glycyl lysine isopeptide (Lys-Gly) (interchain with G-Cter in SUMO2); alternate). Position 81 is an N6-acetyllysine (Lys-81). Arg-106 is a substrate binding site. At Lys-118 the chain carries N6-acetyllysine; alternate. Lys-118 carries the N6-succinyllysine; alternate modification. Lys-126 is subject to N6-acetyllysine. Residue Asn-138 coordinates NAD(+). Positions 138 and 169 each coordinate substrate. Residue His-193 is the Proton acceptor of the active site. N6-acetyllysine occurs at positions 224 and 232. A Phosphotyrosine modification is found at Tyr-239. Residue Lys-243 is modified to N6-acetyllysine. Thr-248 contributes to the substrate binding site. Phosphothreonine is present on Thr-309. At Lys-318 the chain carries N6-acetyllysine; alternate. The residue at position 318 (Lys-318) is an N6-succinyllysine; alternate. Thr-322 carries the post-translational modification Phosphothreonine.

Belongs to the LDH/MDH superfamily. LDH family. Homotetramer. Interacts with PTEN upstream reading frame protein MP31. Post-translationally, ISGylated.

It localises to the cytoplasm. It catalyses the reaction (S)-lactate + NAD(+) = pyruvate + NADH + H(+). It functions in the pathway fermentation; pyruvate fermentation to lactate; (S)-lactate from pyruvate: step 1/1. Functionally, interconverts simultaneously and stereospecifically pyruvate and lactate with concomitant interconversion of NADH and NAD(+). The chain is L-lactate dehydrogenase A chain (LDHA) from Bos taurus (Bovine).